Here is a 524-residue protein sequence, read N- to C-terminus: Leukotriene-B4 omega-hydroxylase 3 (524 aa).

Residues Glu328 and Cys468 each coordinate heme.

This sequence belongs to the cytochrome P450 family. The cofactor is heme.

It is found in the endoplasmic reticulum membrane. The protein resides in the microsome membrane. It carries out the reaction leukotriene B4 + reduced [NADPH--hemoprotein reductase] + O2 = 20-hydroxy-leukotriene B4 + oxidized [NADPH--hemoprotein reductase] + H2O + H(+). It participates in lipid metabolism; leukotriene B4 degradation. Functionally, cytochromes P450 are a group of heme-thiolate monooxygenases. Catalyzes the omega-hydroxylation of LTB4. This is Leukotriene-B4 omega-hydroxylase 3 (Cyp4f14) from Mus musculus (Mouse).